A 63-amino-acid chain; its full sequence is MVCKCDCKNQNCSCNTGTKDCDCSDAKCCEQYCCPTASEKKCCKSGCAGGCKCANCECAQAAH.

It belongs to the metallothionein superfamily. Type 6 family.

Functionally, this protein binds cations of several transition elements. In Caenorhabditis elegans, this protein is Metallothionein-2 (mtl-2).